The chain runs to 167 residues: MSYTSYILAFQLCLILGSYGCYCQDTLTRETEHLKAYLKANTSDVANGGPLFLNILRNWKEESDNKIIQSQIVSFYFKLFDNLKDHEVIKKSMESIKEDIFVKFFNSNLTKMDDFQNLTRISVDDRLVQRKAVSELSNVLNFLSPKSNLKKRKRSQTLFRGRRASKY.

The signal sequence occupies residues 1-23; the sequence is MSYTSYILAFQLCLILGSYGCYC. Residue Gln-24 is modified to Pyrrolidone carboxylic acid. 3 N-linked (GlcNAc...) asparagine glycosylation sites follow: Asn-41, Asn-108, and Asn-117.

This sequence belongs to the type II (or gamma) interferon family. As to quaternary structure, homodimer. Interacts with IFNGR1 (via extracellular domain); this interaction promotes IFNGR1 dimerization. Released primarily from activated T lymphocytes.

The protein localises to the secreted. Functionally, type II interferon produced by immune cells such as T-cells and NK cells that plays crucial roles in antimicrobial, antiviral, and antitumor responses by activating effector immune cells and enhancing antigen presentation. Primarily signals through the JAK-STAT pathway after interaction with its receptor IFNGR1 to affect gene regulation. Upon IFNG binding, IFNGR1 intracellular domain opens out to allow association of downstream signaling components JAK2, JAK1 and STAT1, leading to STAT1 activation, nuclear translocation and transcription of IFNG-regulated genes. Many of the induced genes are transcription factors such as IRF1 that are able to further drive regulation of a next wave of transcription. Plays a role in class I antigen presentation pathway by inducing a replacement of catalytic proteasome subunits with immunoproteasome subunits. In turn, increases the quantity, quality, and repertoire of peptides for class I MHC loading. Increases the efficiency of peptide generation also by inducing the expression of activator PA28 that associates with the proteasome and alters its proteolytic cleavage preference. Up-regulates as well MHC II complexes on the cell surface by promoting expression of several key molecules such as cathepsins B/CTSB, H/CTSH, and L/CTSL. Participates in the regulation of hematopoietic stem cells during development and under homeostatic conditions by affecting their development, quiescence, and differentiation. This Oryctolagus cuniculus (Rabbit) protein is Interferon gamma (IFNG).